Consider the following 552-residue polypeptide: MTKFVFVTGGVVSSLGKGIASASLAAILESRGLKVTLIKLDPYINVDPGTMSPFQHGEVFVTDDGAETDLDLGHYERFIETRMKQANNFTTGRIYQSVLEKERRGDYLGKTVQVIPHVTNEIQEFIKRGAGIGTPDAVDVAICEVGGTVGDIESLPFLEAVRQLSLKLGPNNSAFVHLTYLPWIAAAGELKTKPTQHTVQKLREIGIQPDALLCRALHAVPEEEKEKISLFTNVAEWGVISMWDVDTIYKVPRMLHEQGLDGLICDKLRLNTPPANLKRWDDLVYETEHPRGEVQIAMVGKYVELSDAYKSVNEALKHAGMQSHVRVKITHVDSETISDDNAAQQLAQYDAILVPGGFGSRGVEGKISTARYAREHQVPYLGICLGMQVATIEYARHVAGLQGANSTEFDPATPHPVIALITEWKDEDGTIKTRSENSDLGGTMRLGAQSSDVQPGTLAHSIYGDVVTERHRHRYEANVQYLDRLRSAGLVISALTQREHLTEIVELPQSVHPWFIGVQFHPEFKSTPWSGHPLFNAFIKAAVEHQKPAAKA.

The tract at residues 1–270 is amidoligase domain; the sequence is MTKFVFVTGG…DGLICDKLRL (270 aa). CTP is bound at residue Ser-13. Ser-13 lines the UTP pocket. Residues 14-19 and Asp-71 contribute to the ATP site; that span reads SLGKGI. Mg(2+) contacts are provided by Asp-71 and Glu-144. CTP is bound by residues 151–153, 191–196, and Lys-227; these read DIE and KTKPTQ. Residues 191–196 and Lys-227 contribute to the UTP site; that span reads KTKPTQ. The Glutamine amidotransferase type-1 domain occupies 295–548; that stretch reads QIAMVGKYVE…IKAAVEHQKP (254 aa). Gly-357 lines the L-glutamine pocket. Cys-384 (nucleophile; for glutamine hydrolysis) is an active-site residue. L-glutamine contacts are provided by residues 385–388 and Glu-408; that span reads LGMQ. Residues 432–451 are disordered; the sequence is KTRSENSDLGGTMRLGAQSS. Residue Arg-474 coordinates L-glutamine. Active-site residues include His-521 and Glu-523.

It belongs to the CTP synthase family. As to quaternary structure, homotetramer.

The catalysed reaction is UTP + L-glutamine + ATP + H2O = CTP + L-glutamate + ADP + phosphate + 2 H(+). It catalyses the reaction L-glutamine + H2O = L-glutamate + NH4(+). The enzyme catalyses UTP + NH4(+) + ATP = CTP + ADP + phosphate + 2 H(+). It functions in the pathway pyrimidine metabolism; CTP biosynthesis via de novo pathway; CTP from UDP: step 2/2. With respect to regulation, allosterically activated by GTP, when glutamine is the substrate; GTP has no effect on the reaction when ammonia is the substrate. The allosteric effector GTP functions by stabilizing the protein conformation that binds the tetrahedral intermediate(s) formed during glutamine hydrolysis. Inhibited by the product CTP, via allosteric rather than competitive inhibition. Catalyzes the ATP-dependent amination of UTP to CTP with either L-glutamine or ammonia as the source of nitrogen. Regulates intracellular CTP levels through interactions with the four ribonucleotide triphosphates. The chain is CTP synthase from Acidovorax sp. (strain JS42).